Reading from the N-terminus, the 122-residue chain is uncharacterized protein (122 aa).

The protein localises to the mitochondrion. This is an uncharacterized protein from Arabidopsis thaliana (Mouse-ear cress).